Consider the following 589-residue polypeptide: Protein MICRORCHIDIA 3 (589 aa).

The tract at residues 1–33 is disordered; sequence MAPESKNAGVSVVVNLDSDSDSDNDDGVGGRGA. Residues 542–589 adopt a coiled-coil conformation; that stretch reads MRCEEYVKKETELEQTVSNLAKELEETKSKCARLALLVDAKRREMQQV.

Belongs to the MORC ATPase protein family. As to quaternary structure, homodimer and heterodimer. Component of an RNA-directed DNA methylation (RdDM) complex. Requires Mg(2+) as cofactor. Mn(2+) serves as cofactor.

The protein localises to the nucleus. Functionally, exhibits ATPase activity. Binds DNA/RNA in a non-specific manner and exhibits endonuclease activity. Probably involved in DNA repair. Involved in RNA-directed DNA methylation (RdDM) as a component of the RdDM machinery and required for gene silencing. May also be involved in the regulation of chromatin architecture to maintain gene silencing. This chain is Protein MICRORCHIDIA 3, found in Arabidopsis thaliana (Mouse-ear cress).